Consider the following 286-residue polypeptide: Protease HtpX homolog (286 aa).

2 helical membrane passes run 6-26 (TCFL…YVGG) and 28-48 (QGMI…YFFS). Position 130 (histidine 130) interacts with Zn(2+). Glutamate 131 is an active-site residue. Zn(2+) is bound at residue histidine 134. 2 helical membrane passes run 140–160 (ILTG…ANFA) and 178–198 (AIML…QMAI). Glutamate 203 provides a ligand contact to Zn(2+).

The protein belongs to the peptidase M48B family. It depends on Zn(2+) as a cofactor.

The protein localises to the cell inner membrane. This chain is Protease HtpX homolog, found in Campylobacter curvus (strain 525.92).